Consider the following 191-residue polypeptide: Ribosome maturation factor RimP (191 aa).

The protein belongs to the RimP family.

The protein resides in the cytoplasm. Required for maturation of 30S ribosomal subunits. The sequence is that of Ribosome maturation factor RimP from Caulobacter vibrioides (strain NA1000 / CB15N) (Caulobacter crescentus).